The following is a 347-amino-acid chain: Aspartate-semialdehyde dehydrogenase (347 aa).

Residues 10–13 and 37–38 each bind NADP(+); these read TGMV and RS. Arg-108 contributes to the phosphate binding site. Cys-147 acts as the Acyl-thioester intermediate in catalysis. Gln-174 serves as a coordination point for substrate. 177–178 is an NADP(+) binding site; it reads SG. Substrate is bound at residue Glu-200. Residue Lys-203 coordinates phosphate. Arg-233 provides a ligand contact to substrate. The active-site Proton acceptor is the His-240. Positions 276–299 are disordered; the sequence is APEKPVVVRDEENRPQPRMDRDMD. A compositionally biased stretch (basic and acidic residues) spans 281-299; it reads VVVRDEENRPQPRMDRDMD. 327–328 is a binding site for NADP(+); sequence NT.

It belongs to the aspartate-semialdehyde dehydrogenase family. In terms of assembly, homodimer.

It catalyses the reaction L-aspartate 4-semialdehyde + phosphate + NADP(+) = 4-phospho-L-aspartate + NADPH + H(+). It participates in amino-acid biosynthesis; L-lysine biosynthesis via DAP pathway; (S)-tetrahydrodipicolinate from L-aspartate: step 2/4. It functions in the pathway amino-acid biosynthesis; L-methionine biosynthesis via de novo pathway; L-homoserine from L-aspartate: step 2/3. The protein operates within amino-acid biosynthesis; L-threonine biosynthesis; L-threonine from L-aspartate: step 2/5. Its function is as follows. Catalyzes the NADPH-dependent formation of L-aspartate-semialdehyde (L-ASA) by the reductive dephosphorylation of L-aspartyl-4-phosphate. This is Aspartate-semialdehyde dehydrogenase from Methanothermobacter thermautotrophicus (strain ATCC 29096 / DSM 1053 / JCM 10044 / NBRC 100330 / Delta H) (Methanobacterium thermoautotrophicum).